We begin with the raw amino-acid sequence, 167 residues long: Large ribosomal subunit protein bL9 (167 aa).

Belongs to the bacterial ribosomal protein bL9 family.

Its function is as follows. Binds to the 23S rRNA. The sequence is that of Large ribosomal subunit protein bL9 from Chlamydia trachomatis serovar L2 (strain ATCC VR-902B / DSM 19102 / 434/Bu).